The chain runs to 673 residues: UvrABC system protein B (673 aa).

Residues 26 to 183 enclose the Helicase ATP-binding domain; it reads EGLEDGLAHQ…RRLAELQYAR (158 aa). 39 to 46 contributes to the ATP binding site; the sequence is GVTGSGKT. The Beta-hairpin motif lies at 92-115; that stretch reads YYDYYQPEAYVPSSDTFIEKDASV. Positions 431–597 constitute a Helicase C-terminal domain; that stretch reads QVDDLLSEIR…GLNKKVVDIL (167 aa). The region spanning 633 to 668 is the UVR domain; sequence QQKIHELEGLMMQHAQNLEFEEAAQVRDQLHQLRQL.

Belongs to the UvrB family. Forms a heterotetramer with UvrA during the search for lesions. Interacts with UvrC in an incision complex.

The protein resides in the cytoplasm. The UvrABC repair system catalyzes the recognition and processing of DNA lesions. A damage recognition complex composed of 2 UvrA and 2 UvrB subunits scans DNA for abnormalities. Upon binding of the UvrA(2)B(2) complex to a putative damaged site, the DNA wraps around one UvrB monomer. DNA wrap is dependent on ATP binding by UvrB and probably causes local melting of the DNA helix, facilitating insertion of UvrB beta-hairpin between the DNA strands. Then UvrB probes one DNA strand for the presence of a lesion. If a lesion is found the UvrA subunits dissociate and the UvrB-DNA preincision complex is formed. This complex is subsequently bound by UvrC and the second UvrB is released. If no lesion is found, the DNA wraps around the other UvrB subunit that will check the other stand for damage. This Enterobacter sp. (strain 638) protein is UvrABC system protein B.